We begin with the raw amino-acid sequence, 398 residues long: Lipase member N (398 aa).

Positions 1 to 18 (MMWLLLTTTCLICGTLNA) are cleaved as a signal peptide. Residues 79–379 (PVVYMQHALF…DWNHFDFVWG (301 aa)) form the AB hydrolase-1 domain. Ser-173 acts as the Nucleophile in catalysis. Cys-247 and Cys-256 are disulfide-bonded. Asn-272 carries an N-linked (GlcNAc...) asparagine glycan. Active-site charge relay system residues include Asp-344 and His-373.

The protein belongs to the AB hydrolase superfamily. Lipase family. In terms of tissue distribution, highly expressed in the epidermis in the granular keratinocytes. Also detected in other tissues, although at much lower levels, including lung and spleen.

Its subcellular location is the secreted. The catalysed reaction is a sterol ester + H2O = a sterol + a fatty acid + H(+). It catalyses the reaction a triacylglycerol + H2O = a 1,2-diacylglycerol + a fatty acid + H(+). It carries out the reaction a triacylglycerol + H2O = a diacylglycerol + a fatty acid + H(+). The enzyme catalyses a cholesterol ester + H2O = cholesterol + a fatty acid + H(+). Functionally, plays a highly specific role in the last step of keratinocyte differentiation. Contains two distinct domains: the alpha/beta hydrolase fold and the abhydrolase-associated lipase region, also features the consensus sequence of the active site of a genuine lipase. May have an essential function in lipid metabolism of the most differentiated epidermal layers. The polypeptide is Lipase member N (LIPN) (Homo sapiens (Human)).